We begin with the raw amino-acid sequence, 90 residues long: MAIFKSISSISNLTGSMGSSIGASNLNGFASNDNSISCFDGGCGGSGGLGGWSGLSGWGGIGGFNGGCGGSNTNIINLDIDICRRRRRCC.

Belongs to the UPF0512 family.

The protein is UPF0512 protein L of Dictyostelium discoideum (Social amoeba).